The following is a 153-amino-acid chain: Endoribonuclease YbeY (153 aa).

Zn(2+) is bound by residues H118, H122, and H128.

It belongs to the endoribonuclease YbeY family. Requires Zn(2+) as cofactor.

It is found in the cytoplasm. Functionally, single strand-specific metallo-endoribonuclease involved in late-stage 70S ribosome quality control and in maturation of the 3' terminus of the 16S rRNA. This is Endoribonuclease YbeY from Pelagibacter ubique (strain HTCC1062).